The following is a 289-amino-acid chain: uncharacterized protein (289 aa).

9 helical membrane passes run 13 to 32, 37 to 59, 80 to 99, 104 to 121, 141 to 160, 165 to 183, 203 to 225, 235 to 252, and 265 to 287; these read INFA…LSGS, LIIS…HLND, IVTE…IFFI, EIAL…WLYS, VFTY…TIFS, VGVV…GFFL, VLSP…FVVI, TSSL…FAIY, and IISS…AIGC.

Its subcellular location is the cell membrane. This is an uncharacterized protein from Archaeoglobus fulgidus (strain ATCC 49558 / DSM 4304 / JCM 9628 / NBRC 100126 / VC-16).